A 94-amino-acid chain; its full sequence is ATP synthase F(0) complex subunit f, mitochondrial (94 aa).

At alanine 2 the chain carries N-acetylalanine. Serine 3 is modified (phosphoserine). The residue at position 22 (lysine 22) is an N6-acetyllysine. Residues 68–85 form a helical membrane-spanning segment; it reads MVLACYVLFSYSFSYKHL.

The protein belongs to the ATPase F chain family. In terms of assembly, component of the ATP synthase complex composed at least of ATP5F1A/subunit alpha, ATP5F1B/subunit beta, ATP5MC1/subunit c (homooctomer), MT-ATP6/subunit a, MT-ATP8/subunit 8, ATP5ME/subunit e, ATP5MF/subunit f, ATP5MG/subunit g, ATP5MK/subunit k, ATP5MJ/subunit j, ATP5F1C/subunit gamma, ATP5F1D/subunit delta, ATP5F1E/subunit epsilon, ATP5PF/subunit F6, ATP5PB/subunit b, ATP5PD/subunit d, ATP5PO/subunit OSCP. ATP synthase complex consists of a soluble F(1) head domain (subunits alpha(3) and beta(3)) - the catalytic core - and a membrane F(0) domain - the membrane proton channel (subunits c, a, 8, e, f, g, k and j). These two domains are linked by a central stalk (subunits gamma, delta, and epsilon) rotating inside the F1 region and a stationary peripheral stalk (subunits F6, b, d, and OSCP).

It is found in the mitochondrion. It localises to the mitochondrion inner membrane. Subunit f, of the mitochondrial membrane ATP synthase complex (F(1)F(0) ATP synthase or Complex V) that produces ATP from ADP in the presence of a proton gradient across the membrane which is generated by electron transport complexes of the respiratory chain. ATP synthase complex consist of a soluble F(1) head domain - the catalytic core - and a membrane F(1) domain - the membrane proton channel. These two domains are linked by a central stalk rotating inside the F(1) region and a stationary peripheral stalk. During catalysis, ATP synthesis in the catalytic domain of F(1) is coupled via a rotary mechanism of the central stalk subunits to proton translocation. In vivo, can only synthesize ATP although its ATP hydrolase activity can be activated artificially in vitro. Part of the complex F(0) domain. The protein is ATP synthase F(0) complex subunit f, mitochondrial of Pongo abelii (Sumatran orangutan).